The primary structure comprises 160 residues: Transcription elongation factor GreA (160 aa).

A coiled-coil region spans residues 49-73 (HAAKEEQSHNEGRIADLEDKLARAD).

Belongs to the GreA/GreB family.

Functionally, necessary for efficient RNA polymerase transcription elongation past template-encoded arresting sites. The arresting sites in DNA have the property of trapping a certain fraction of elongating RNA polymerases that pass through, resulting in locked ternary complexes. Cleavage of the nascent transcript by cleavage factors such as GreA or GreB allows the resumption of elongation from the new 3'terminus. GreA releases sequences of 2 to 3 nucleotides. The polypeptide is Transcription elongation factor GreA (Rhodopseudomonas palustris (strain BisA53)).